The sequence spans 644 residues: Chaperone protein DnaK (644 aa).

Thr-199 bears the Phosphothreonine; by autocatalysis mark. Residues 603–644 form a disordered region; that stretch reads YAKKSSEGQAAQGQTQSQESTKPAEEGVVDAEFEEVKEEDKK. Positions 609 to 623 are enriched in polar residues; the sequence is EGQAAQGQTQSQEST. Residues 629–644 show a composition bias toward acidic residues; sequence GVVDAEFEEVKEEDKK.

It belongs to the heat shock protein 70 family.

Acts as a chaperone. This is Chaperone protein DnaK from Legionella pneumophila (strain Corby).